Here is a 64-residue protein sequence, read N- to C-terminus: uncharacterized protein (64 aa).

It is found in the host cytoplasm. This is an uncharacterized protein from Enterobacteriaceae (Bacteriophage Mu).